The sequence spans 658 residues: DNA mismatch repair protein MutL (658 aa).

Basic and acidic residues predominate over residues 114-130 (RQEDSSHATQVKAEDGK). Disordered stretches follow at residues 114–138 (RQED…TAAA) and 355–405 (PSEN…HSLS).

Belongs to the DNA mismatch repair MutL/HexB family.

Functionally, this protein is involved in the repair of mismatches in DNA. It is required for dam-dependent methyl-directed DNA mismatch repair. May act as a 'molecular matchmaker', a protein that promotes the formation of a stable complex between two or more DNA-binding proteins in an ATP-dependent manner without itself being part of a final effector complex. The chain is DNA mismatch repair protein MutL from Neisseria gonorrhoeae (strain ATCC 700825 / FA 1090).